A 402-amino-acid chain; its full sequence is AA9 family lytic polysaccharide monooxygenase E (402 aa).

The signal sequence occupies residues 1 to 16 (MSRLVSFASLLAAVNA). Residue H17 participates in Cu(2+) binding. 2 disulfide bridges follow: C72/C194 and C113/C117. An N-linked (GlcNAc...) asparagine glycan is attached at N75. H102 contacts Cu(2+). N-linked (GlcNAc...) asparagine glycosylation occurs at N154. Residues H180 and Q189 each coordinate O2. Y191 is a Cu(2+) binding site. The region spanning 364-400 (GSNPLYAQCGGLNFKGASGCVAGATCKKMNPYYSQCV) is the CBM1 domain.

The protein belongs to the polysaccharide monooxygenase AA9 family. The cofactor is Cu(2+).

It is found in the secreted. It carries out the reaction [(1-&gt;4)-beta-D-glucosyl]n+m + reduced acceptor + O2 = 4-dehydro-beta-D-glucosyl-[(1-&gt;4)-beta-D-glucosyl]n-1 + [(1-&gt;4)-beta-D-glucosyl]m + acceptor + H2O.. Lytic polysaccharide monooxygenase (LPMO) that depolymerizes crystalline and amorphous polysaccharides via the oxidation of scissile alpha- or beta-(1-4)-glycosidic bonds, yielding C1 or C4 oxidation products. Catalysis by LPMOs requires the reduction of the active-site copper from Cu(II) to Cu(I) by a reducing agent and H(2)O(2) or O(2) as a cosubstrate. The sequence is that of AA9 family lytic polysaccharide monooxygenase E from Emericella nidulans (strain FGSC A4 / ATCC 38163 / CBS 112.46 / NRRL 194 / M139) (Aspergillus nidulans).